Reading from the N-terminus, the 444-residue chain is MTKIKYGVVSLGCDKNRIDSEVMINEIKKEGIITNDPKEADVIIVNTCGFIEDSKKESIDTILEMSNYKNNNCKVLVVTGCLSQRYGEELQELLPEVDVMLGVNDYDKLSDAIKKSIEKGEKSLYCNYSNTVINEGGRVLTTQKHYAYLRIAEGCDNFCTYCAIPKIRGKYRSRKIEDIIEEAKFLSQNGVKEIIIVAQDTTRYGLDIYGEKTLPSLLKQLEEVDGIEWIRLLYCYPEDITEELIEEFARNKKLCKYVDVPIQHISDSVLKRMGRKGNKQLVTKVLRDIKKRVPEMSIRTSLIVGFPGEMEEDFKELKDFVEEFKFQNLGVFKYSQEEGTPAATMEDQVLEEIKETRREELMKMQRDIVKSINADKVNKVYKVVVDNFNGEHYIGRNYEMLPEIDGAIYFKCDKILNIGEMVCIKILETLEYDLIGVVCDESCK.

One can recognise an MTTase N-terminal domain in the interval 4–118 (IKYGVVSLGC…LSDAIKKSIE (115 aa)). Positions 13, 48, 81, 155, 159, and 162 each coordinate [4Fe-4S] cluster. The 233-residue stretch at 141–373 (TTQKHYAYLR…MQRDIVKSIN (233 aa)) folds into the Radical SAM core domain. The TRAM domain maps to 374-440 (ADKVNKVYKV…EYDLIGVVCD (67 aa)).

It belongs to the methylthiotransferase family. RimO subfamily. The cofactor is [4Fe-4S] cluster.

Its subcellular location is the cytoplasm. The catalysed reaction is L-aspartate(89)-[ribosomal protein uS12]-hydrogen + (sulfur carrier)-SH + AH2 + 2 S-adenosyl-L-methionine = 3-methylsulfanyl-L-aspartate(89)-[ribosomal protein uS12]-hydrogen + (sulfur carrier)-H + 5'-deoxyadenosine + L-methionine + A + S-adenosyl-L-homocysteine + 2 H(+). Catalyzes the methylthiolation of an aspartic acid residue of ribosomal protein uS12. In Clostridium tetani (strain Massachusetts / E88), this protein is Ribosomal protein uS12 methylthiotransferase RimO.